We begin with the raw amino-acid sequence, 415 residues long: PRKCA-binding protein (415 aa).

One can recognise a PDZ domain in the interval 22–105 (KVTLQKDAQN…EVTIHYNKLQ (84 aa)). C44 and C46 together coordinate Zn(2+). T82 is subject to Phosphothreonine. In terms of domain architecture, AH spans 144–357 (LCNDGLVKRL…CYAVLRDADV (214 aa)). The interval 376-415 (EEFTDGEEEEEEEDTAAGEPSRDTRGAAGPLDKGGSWCDS) is disordered. The span at 377 to 391 (EFTDGEEEEEEEDTA) shows a compositional bias: acidic residues. C413 is lipidated: S-palmitoyl cysteine; by DHHC8.

In terms of assembly, monomer and homodimer. Interacts with CXADR. Interacts presynaptically with the glutamate receptors GRIA2, GRIA3, GRIK3, isoform 3 of GRIA4, isoform A of GRM4, GRM7 and GRM8; with NAPA and NAPB; and with BTG2. The interaction with NAPA and NAPB disrupts the interaction with GRIA2, conducting to the internalization of GRIA2. Interacts with PRKCA; with the amine transporters SLC6A2 and SLC6A3; with the channels ASIC1 and ASIC2; with the GTP-binding proteins ARF1 and ARF3; with the ephrin receptor tyrosine kinases EPHA7, EPHB1 and EPHB2; with ERBB2 and through its PDZ domain with the C-terminal tail of PRLHR. Interacts with UNC5A. Interacts (via AH domain) with NCS1/FREQ; in a calcium-dependent manner. Interacts with F-actin and associates with the ARP2/3 complex. Interacts (via PDZ domain) with ARF1 (activated); the interaction blocks Arp2/3 complex inhibition. Interacts with SORCS3. Phosphorylation at Thr-82 appears to inhibit the interaction with AMPA receptors. In terms of processing, palmitoylation on Cys-413 is essential for long-term synaptic depression (LTD). Ubiquitous.

The protein resides in the cytoplasm. The protein localises to the perinuclear region. It localises to the membrane. Its subcellular location is the postsynaptic density. It is found in the synapse. The protein resides in the synaptosome. The protein localises to the cytoskeleton. Probable adapter protein that bind to and organize the subcellular localization of a variety of membrane proteins containing some PDZ recognition sequence. Involved in the clustering of various receptors, possibly by acting at the receptor internalization level. Plays a role in synaptic plasticity by regulating the trafficking and internalization of AMPA receptors. May be regulated upon PRKCA activation. May regulate ASIC1/ASIC3 channel. Regulates actin polymerization by inhibiting the actin-nucleating activity of the Arp2/3 complex; the function is competitive with nucleation promoting factors and is linked to neuronal morphology regulation and AMPA receptor (AMPAR) endocytosis. Via interaction with the Arp2/3 complex involved in regulation of synaptic plasicity of excitatory synapses and required for spine shrinkage during long-term depression (LTD). Involved in regulation of astrocyte morphology, antagonistic to Arp2/3 complex activator WASL/N-WASP function. This Homo sapiens (Human) protein is PRKCA-binding protein (PICK1).